A 556-amino-acid polypeptide reads, in one-letter code: Solute carrier family 22 member 1 (556 aa).

Topologically, residues 1-21 (MPTVDDVLEQVGEFGWFQKQA) are cytoplasmic. A helical transmembrane segment spans residues 22-42 (FLLLCLISASLAPIYVGIVFL). At 43-150 (GFTPGHYCQN…LVCGDAWKVD (108 aa)) the chain is on the extracellular side. The N-linked (GlcNAc...) asparagine glycan is linked to asparagine 71. A helical transmembrane segment spans residues 151–171 (LFQSCVNLGFFLGSLVVGYIA). Residues 172–177 (DRFGRK) lie on the Cytoplasmic side of the membrane. The helical transmembrane segment at 178–198 (LCLLVTTLVTSVSGVLTAVAP) threads the bilayer. Topologically, residues 199-211 (DYTSMLLFRLLQG) are extracellular. A helical membrane pass occupies residues 212–231 (MVSKGSWVSGYTLITEFVGS). Residues 232–238 (GYRRTTA) lie on the Cytoplasmic side of the membrane. A helical transmembrane segment spans residues 239 to 259 (ILYQMAFTVGLVGLAGVAYAI). At 260–263 (PDWR) the chain is on the extracellular side. A helical membrane pass occupies residues 264 to 284 (WLQLAVSLPTFLFLLYYWFVP). The Proline-rich sequence signature appears at 284-288 (PESPR). The Cytoplasmic portion of the chain corresponds to 285–348 (ESPRWLLSQK…FRTPNLRKHT (64 aa)). Position 334 is a phosphoserine (serine 334). The helical transmembrane segment at 349–369 (VILMYLWFSCAVLYQGLIMHV) threads the bilayer. Residues 370 to 377 (GATGANLY) lie on the Extracellular side of the membrane. The helical transmembrane segment at 378-398 (LDFFYSSLVEFPAAFIILVTI) threads the bilayer. The Cytoplasmic segment spans residues 399-403 (DRIGR). The chain crosses the membrane as a helical span at residues 404 to 424 (IYPIAASNLVTGAACLLMIFI). Over 425–429 (PHELH) the chain is Extracellular. The chain crosses the membrane as a helical span at residues 430–452 (WLNVTLACLGRMGATIVLQMVCL). Residues 453–465 (VNAELYPTFIRNL) are Cytoplasmic-facing. A helical membrane pass occupies residues 466–486 (GMMVCSALCDLGGIFTPFMVF). At 487-493 (RLMEVWQ) the chain is on the extracellular side. A helical membrane pass occupies residues 494 to 514 (ALPLILFGVLGLTAGAMTLLL). Topologically, residues 515–556 (PETKGVALPETIEEAENLGRRKSKAKENTIYLQVQTGKSSST) are cytoplasmic. Threonine 543 carries the post-translational modification Phosphothreonine.

The protein belongs to the major facilitator (TC 2.A.1) superfamily. Organic cation transporter (TC 2.A.1.19) family. Post-translationally, phosphorylated. In terms of tissue distribution, expressed in kidney cortex in S1, S2 segments of renal proximal tubules as well as in kidney medulla. Expressed throughout the liver lobuli, in hepatocytes surrounding the central veins. Expressed in enterocytes of villi and crypts in small intestine. Expressed in brain, in some white matter regions like the corpus callosum and in the granular layer of the cerebellum. Expressed in Sertoli cells in testis. Expressed in colon. Expressed in tracheal and bronchial ciliated epithelium in the respiratory tract. Expressed in spleen, moderately in skin, and weakly in the gastrointestinal tract, lung, thymus, muscle, and prostate. As to expression, expressed in kidney cortex and medulla. Expressed in intestine, liver and colon.

The protein localises to the basolateral cell membrane. It localises to the apical cell membrane. It is found in the lateral cell membrane. The protein resides in the basal cell membrane. Its subcellular location is the cell membrane. The catalysed reaction is 1-methylnicotinamide(out) = 1-methylnicotinamide(in). It carries out the reaction dopamine(out) = dopamine(in). It catalyses the reaction serotonin(out) = serotonin(in). The enzyme catalyses (R)-adrenaline(out) = (R)-adrenaline(in). The catalysed reaction is (R)-noradrenaline(out) = (R)-noradrenaline(in). It carries out the reaction histamine(out) = histamine(in). It catalyses the reaction guanidine(out) = guanidine(in). The enzyme catalyses choline(out) = choline(in). The catalysed reaction is acetylcholine(in) = acetylcholine(out). It carries out the reaction thiamine(in) = thiamine(out). It catalyses the reaction agmatine(out) = agmatine(in). The enzyme catalyses putrescine(out) = putrescine(in). The catalysed reaction is spermidine(in) = spermidine(out). It carries out the reaction (R)-carnitine(in) = (R)-carnitine(out). It catalyses the reaction O-isobutanoyl-(R)-carnitine(in) = O-isobutanoyl-(R)-carnitine(out). The enzyme catalyses O-acetyl-(R)-carnitine(in) = O-acetyl-(R)-carnitine(out). The catalysed reaction is O-3-hydroxybutanoyl-(R)-carnitine(in) = O-3-hydroxybutanoyl-(R)-carnitine(out). It carries out the reaction O-propanoyl-(R)-carnitine(in) = O-propanoyl-(R)-carnitine(out). It catalyses the reaction O-butanoyl-(R)-carnitine(in) = O-butanoyl-(R)-carnitine(out). The enzyme catalyses O-2-methylbutanoyl-(R)-carnitine(in) = O-2-methylbutanoyl-(R)-carnitine(out). The catalysed reaction is O-3-methylbutanoyl-(R)-carnitine(in) = O-3-methylbutanoyl-(R)-carnitine(out). It carries out the reaction O-hexanoyl-(R)-carnitine(in) = O-hexanoyl-(R)-carnitine(out). It catalyses the reaction L-histidyl-L-proline diketopiperazine(in) = L-histidyl-L-proline diketopiperazine(out). The enzyme catalyses (R)-salsolinol(in) = (R)-salsolinol(out). The catalysed reaction is prostaglandin F2alpha(out) = prostaglandin F2alpha(in). It carries out the reaction prostaglandin E2(out) = prostaglandin E2(in). Its activity is regulated as follows. Phosphorylation of the transporter leads to changes in its substrate affinity, resulting in a regulation of the transport activity. In contrast with human ortholog, ASP uptake is stimulated by protein kinase A (PKA) and C (PKC) and endogenous tyrosine kinase activation. ASP affinity is induced by PKC-dependent phosphorylation. Inhibited by cGMP, most likely through a cGMP-binding protein that interacts with OCT1. Electrogenic voltage-dependent transporter that mediates the transport of a variety of organic cations such as endogenous bioactive amines, cationic drugs and xenobiotics. Functions as a pH- and Na(+)-independent, bidirectional transporter. Cation cellular uptake or release is driven by the electrochemical potential (i.e. membrane potential and concentration gradient) and substrate selectivity. Hydrophobicity is a major requirement for recognition in polyvalent substrates and inhibitors. Primarily expressed in the basolateral membrane of hepatocytes and proximal tubules and involved in the uptake and disposition of cationic compounds from the blood by hepatic and renal clearance. Most likely functions as an uptake carrier in enterocytes contributing to the intestinal excretion and elimination of organic cations from the systemic circulation. Transports endogenous monoamines such as N-1-methylnicotinamide (NMN), guanidine, neurotransmitters dopamine, serotonin, noradrenaline, adrenaline and histamine, and quaternary ammonium compound such as choline. Also transports natural polyamines such as spermidine, agmatine and putrescine at low affinity, but relatively high turnover. Involved in the hepatic uptake of vitamin B1/thiamine, hence regulating hepatic lipid and energy metabolism. Contributes to the influx and efflux of fatty acid carriers carnitines and acylcarnitines across the basolateral membrane of hepatocytes, from the liver to the systemic circulation and inversely and may be involved in regulating the systemic availability of hepatic acylcarnitines. Mediates the bidirectional transport of acetylcholine (ACh) at the apical membrane of ciliated cell in airway epithelium, thereby playing a role in luminal release of ACh from bronchial epithelium. Transports dopaminergic neuromodulators cyclo(his-pro) and salsolinol with lower efficency. Also capable of transporting non-amine endogenous compounds such as prostaglandin E2 (PGE2) and prostaglandin F2-alpha (PGF2-alpha). May contribute to the transport of cationic compounds in testis across the blood-testis-barrier. Also mediates the uptake of xenobiotics tributylmethylammonium (TBuMA), quinidine, N-methyl-quinine (NMQ), N-methyl-quinidine (NMQD) N-(4,4-azo-n-pentyl)-quinuclidine (APQ), azidoprocainamide methoiodide (AMP), N-(4,4-azo-n-pentyl)-21-deoxyajmalinium (APDA) and 4-(4-(dimethylamino)styryl)-N-methylpyridinium (ASP). In terms of biological role, functional isoform capable of transporting TEA. The protein is Solute carrier family 22 member 1 of Rattus norvegicus (Rat).